Consider the following 511-residue polypeptide: Activin receptor type-2B (511 aa).

Residues 1-20 (MGASVALTFLLLLATFRAGS) form the signal peptide. At 21–136 (GHDEVETREC…KPQPSASVLN (116 aa)) the chain is on the extracellular side. A disulfide bridge connects residues C30 and C61. N-linked (GlcNAc...) asparagine glycans are attached at residues N43 and N67. 3 cysteine pairs are disulfide-bonded: C86–C105, C92–C104, and C106–C111. The helical transmembrane segment at 137–157 (ILIYSLLPIVGLSMAILLAFW) threads the bilayer. Residues 158–511 (MYRHRKPSYG…VDLPPKESSI (354 aa)) are Cytoplasmic-facing. In terms of domain architecture, Protein kinase spans 189 to 477 (LQLLDIKARG…LSAGCVEERI (289 aa)). Residues 195-203 (KARGRFGCV) and K216 each bind ATP. D320 serves as the catalytic Proton acceptor.

Belongs to the protein kinase superfamily. TKL Ser/Thr protein kinase family. TGFB receptor subfamily.

The protein localises to the membrane. It catalyses the reaction L-threonyl-[receptor-protein] + ATP = O-phospho-L-threonyl-[receptor-protein] + ADP + H(+). The enzyme catalyses L-seryl-[receptor-protein] + ATP = O-phospho-L-seryl-[receptor-protein] + ADP + H(+). In terms of biological role, receptor for activin A, activin B and inhibin A. Involved in transmembrane signaling. The chain is Activin receptor type-2B (acvr2b) from Xenopus laevis (African clawed frog).